We begin with the raw amino-acid sequence, 381 residues long: Creatine kinase M-type (381 aa).

One can recognise a Phosphagen kinase N-terminal domain in the interval 11-98 (KLNYSAAEEF…FDPVIEDRHG (88 aa)). The region spanning 125–367 (YVLSSRVRTG…KLMVEMEKRL (243 aa)) is the Phosphagen kinase C-terminal domain. ATP-binding positions include 128–132 (SSRVR), histidine 191, arginine 236, arginine 292, 320–325 (RGTGGV), and aspartate 335.

It belongs to the ATP:guanido phosphotransferase family. Dimer of identical or non-identical chains. With MM being the major form in skeletal muscle and myocardium, MB existing in myocardium, and BB existing in many tissues, especially brain.

Its subcellular location is the cytoplasm. The enzyme catalyses creatine + ATP = N-phosphocreatine + ADP + H(+). Reversibly catalyzes the transfer of phosphate between ATP and various phosphogens (e.g. creatine phosphate). Creatine kinase isoenzymes play a central role in energy transduction in tissues with large, fluctuating energy demands, such as skeletal muscle, heart, brain and spermatozoa. The protein is Creatine kinase M-type of Torpedo marmorata (Marbled electric ray).